Reading from the N-terminus, the 138-residue chain is Cysteine desulfuration protein SufE (138 aa).

The active-site Cysteine persulfide intermediate is Cys-51.

This sequence belongs to the SufE family. Homodimer. Interacts with SufS.

It localises to the cytoplasm. It functions in the pathway cofactor biosynthesis; iron-sulfur cluster biosynthesis. Its function is as follows. Participates in cysteine desulfuration mediated by SufS. Cysteine desulfuration mobilizes sulfur from L-cysteine to yield L-alanine and constitutes an essential step in sulfur metabolism for biosynthesis of a variety of sulfur-containing biomolecules. Functions as a sulfur acceptor for SufS, by mediating the direct transfer of the sulfur atom from the S-sulfanylcysteine of SufS, an intermediate product of cysteine desulfuration process. This chain is Cysteine desulfuration protein SufE, found in Sodalis glossinidius (strain morsitans).